The primary structure comprises 290 residues: Elongation factor Ts (290 aa).

Residues 83–86 (TDFV) form an involved in Mg(2+) ion dislocation from EF-Tu region.

It belongs to the EF-Ts family.

The protein localises to the cytoplasm. Associates with the EF-Tu.GDP complex and induces the exchange of GDP to GTP. It remains bound to the aminoacyl-tRNA.EF-Tu.GTP complex up to the GTP hydrolysis stage on the ribosome. The sequence is that of Elongation factor Ts (tsf) from Aquifex aeolicus (strain VF5).